Consider the following 260-residue polypeptide: 3-methyl-2-oxobutanoate hydroxymethyltransferase (260 aa).

Residues Asp-42 and Asp-81 each contribute to the Mg(2+) site. 3-methyl-2-oxobutanoate contacts are provided by residues 42 to 43 (DS), Asp-81, and Lys-109. Glu-111 contributes to the Mg(2+) binding site. Residue Glu-178 is the Proton acceptor of the active site.

Belongs to the PanB family. Homodecamer; pentamer of dimers. The cofactor is Mg(2+).

It localises to the cytoplasm. The enzyme catalyses 3-methyl-2-oxobutanoate + (6R)-5,10-methylene-5,6,7,8-tetrahydrofolate + H2O = 2-dehydropantoate + (6S)-5,6,7,8-tetrahydrofolate. It participates in cofactor biosynthesis; (R)-pantothenate biosynthesis; (R)-pantoate from 3-methyl-2-oxobutanoate: step 1/2. In terms of biological role, catalyzes the reversible reaction in which hydroxymethyl group from 5,10-methylenetetrahydrofolate is transferred onto alpha-ketoisovalerate to form ketopantoate. This Ruthia magnifica subsp. Calyptogena magnifica protein is 3-methyl-2-oxobutanoate hydroxymethyltransferase.